The following is a 910-amino-acid chain: DNA mismatch repair protein MutS (910 aa).

The segment covering 1 to 11 (MEAKVEEKEPE) has biased composition (basic and acidic residues). The tract at residues 1 to 21 (MEAKVEEKEPEPVENAGPDAP) is disordered. 658 to 665 (GPNMGGKS) is a binding site for ATP.

Belongs to the DNA mismatch repair MutS family.

In terms of biological role, this protein is involved in the repair of mismatches in DNA. It is possible that it carries out the mismatch recognition step. This protein has a weak ATPase activity. The protein is DNA mismatch repair protein MutS of Brucella abortus (strain 2308).